Here is a 398-residue protein sequence, read N- to C-terminus: MTEAPDVDLADGNFYASREARAAYRWMRANQPVFRDRNGLAAASTYQAVIDAERQPELFSNAGGIRPDQPALPMMIDMDDPAHLLRRKLVNAGFTRKRVKDKEASIAALCDTLIDAVCERGECDFVRDLAAPLPMAVIGDMLGVRPEQRDMFLRWSDDLVTFLSSHVSQEDFQITMDAFAAYNDFTRATIAARRADPTDDLVSVLVSSEVDGERLSDDELVMETLLILIGGDETTRHTLSGGTEQLLRNRDQWDLLQRDPSLLPGAIEEMLRWTAPVKNMCRVLTADTEFHGTALCAGEKMMLLFESANFDEAVFCEPEKFDVQRNPNSHLAFGFGTHFCLGNQLARLELSLMTERVLRRLPDLRLVADDSVLPLRPANFVSGLESMPVVFTPSPPLG.

C340 is a binding site for heme.

This sequence belongs to the cytochrome P450 family. The cofactor is heme.

The catalysed reaction is cholest-4-en-3-one + 6 reduced [2Fe-2S]-[ferredoxin] + 3 O2 + 5 H(+) = (25R)-3-oxocholest-4-en-26-oate + 6 oxidized [2Fe-2S]-[ferredoxin] + 4 H2O. It carries out the reaction cholest-4-en-3-one + 2 reduced [2Fe-2S]-[ferredoxin] + O2 + 2 H(+) = (25R)-3-oxocholest-4-en-26-ol + 2 oxidized [2Fe-2S]-[ferredoxin] + H2O. It catalyses the reaction (25R)-3-oxocholest-4-en-26-ol + 2 reduced [2Fe-2S]-[ferredoxin] + O2 + 2 H(+) = (25R)-3-oxocholest-4-en-26-al + 2 oxidized [2Fe-2S]-[ferredoxin] + 2 H2O. The enzyme catalyses (25R)-3-oxocholest-4-en-26-al + 2 reduced [2Fe-2S]-[ferredoxin] + O2 + H(+) = (25R)-3-oxocholest-4-en-26-oate + 2 oxidized [2Fe-2S]-[ferredoxin] + H2O. The catalysed reaction is cholesterol + NADPH + O2 + H(+) = 26-hydroxycholesterol + NADP(+) + H2O. It carries out the reaction 26-hydroxycholesterol + 2 reduced [2Fe-2S]-[ferredoxin] + O2 + 2 H(+) = (3beta)-hydroxy-cholest-5-en-26-al + 2 oxidized [2Fe-2S]-[ferredoxin] + 2 H2O. It catalyses the reaction (3beta)-hydroxy-cholest-5-en-26-al + NADPH + O2 = (3beta)-hydroxy-cholest-5-en-26-oate + NADP(+) + H2O. The enzyme catalyses (25S)-3-oxocholest-4-en-26-ol + 2 reduced [2Fe-2S]-[ferredoxin] + O2 + 2 H(+) = (25S)-3-oxocholest-4-en-26-al + 2 oxidized [2Fe-2S]-[ferredoxin] + 2 H2O. The catalysed reaction is (25S)-3-oxocholest-4-en-26-al + 2 reduced [2Fe-2S]-[ferredoxin] + O2 + H(+) = (25S)-3-oxocholest-4-en-26-oate + 2 oxidized [2Fe-2S]-[ferredoxin] + H2O. It participates in steroid metabolism; cholesterol degradation. With respect to regulation, inhibited by econazole, clotrimazole and miconazole. In terms of biological role, involved in the utilization of cholesterol as the sole carbon and energy source by degrading the side chain during infection. Primarily catalyzes the sequential oxidation of the terminal methyl of cholest-4-en-3-one into (25R)-26-hydroxycholest-4-en-3-one (alcohol), (25R)-26-oxocholest-4-en-3-one (aldehyde), to finally yield the carboxylic acid (25R)-3-oxocholest-4-en-26-oate. In vitro, Cyp142 catalyzes with equal preference the oxidation of both (25R)- and (25S)-26-hydroxycholest-4-en-3-one diastereomers to the corresponding carboxylic acid which is a prerequisite for entry into the beta-oxidation pathway. Also able to sequentially oxidize cholesterol itself, not only cholest-4-en-3-one. The protein is Steroid C26-monooxygenase (cyp142) of Mycobacterium tuberculosis (strain ATCC 25618 / H37Rv).